We begin with the raw amino-acid sequence, 157 residues long: Large ribosomal subunit protein uL11 (157 aa).

Disordered regions lie at residues M1 to P28 and N138 to K157. Over residues N139–K157 the composition is skewed to basic and acidic residues.

The protein belongs to the universal ribosomal protein uL11 family. Part of the ribosomal stalk of the 50S ribosomal subunit. Interacts with L10 and the large rRNA to form the base of the stalk. L10 forms an elongated spine to which L12 dimers bind in a sequential fashion forming a multimeric L10(L12)X complex.

Its function is as follows. Forms part of the ribosomal stalk which helps the ribosome interact with GTP-bound translation factors. The chain is Large ribosomal subunit protein uL11 from Haloquadratum walsbyi (strain DSM 16790 / HBSQ001).